We begin with the raw amino-acid sequence, 112 residues long: Nucleoid-associated protein FTF0810c (112 aa).

Positions 1-27 (MNFDMSKLMQQAQKMQEQMKKAQQERE) are disordered. Basic and acidic residues predominate over residues 17–27 (EQMKKAQQERE).

It belongs to the YbaB/EbfC family. Homodimer.

It is found in the cytoplasm. The protein resides in the nucleoid. In terms of biological role, binds to DNA and alters its conformation. May be involved in regulation of gene expression, nucleoid organization and DNA protection. The chain is Nucleoid-associated protein FTF0810c from Francisella tularensis subsp. tularensis (strain FSC 198).